Here is a 430-residue protein sequence, read N- to C-terminus: Phosphomethylpyrimidine synthase (430 aa).

Residues Asn-67, Met-96, Tyr-125, His-161, 183 to 185 (SRG), 224 to 227 (DALR), and Glu-263 contribute to the substrate site. His-267 is a Zn(2+) binding site. Tyr-290 contributes to the substrate binding site. His-331 contributes to the Zn(2+) binding site. Cys-406, Cys-409, and Cys-413 together coordinate [4Fe-4S] cluster.

The protein belongs to the ThiC family. Homodimer. [4Fe-4S] cluster is required as a cofactor.

It carries out the reaction 5-amino-1-(5-phospho-beta-D-ribosyl)imidazole + S-adenosyl-L-methionine = 4-amino-2-methyl-5-(phosphooxymethyl)pyrimidine + CO + 5'-deoxyadenosine + formate + L-methionine + 3 H(+). It functions in the pathway cofactor biosynthesis; thiamine diphosphate biosynthesis. Its function is as follows. Catalyzes the synthesis of the hydroxymethylpyrimidine phosphate (HMP-P) moiety of thiamine from aminoimidazole ribotide (AIR) in a radical S-adenosyl-L-methionine (SAM)-dependent reaction. The chain is Phosphomethylpyrimidine synthase from Campylobacter jejuni (strain RM1221).